Reading from the N-terminus, the 461-residue chain is Elongation factor 1-alpha (461 aa).

At G2 the chain carries N,N,N-trimethylglycine. K3 carries the post-translational modification N6,N6-dimethyllysine; alternate. N6-methyllysine; alternate is present on K3. Residues 6–241 form the tr-type G domain; sequence KTHINVVVIG…DSIEPPKRPT (236 aa). The interval 15–22 is G1; the sequence is GHVDSGKS. 15–22 serves as a coordination point for GTP; the sequence is GHVDSGKS. Residue K31 is modified to N6-methyllysine. The tract at residues 71–75 is G2; sequence GITID. K80 is modified (N6,N6,N6-trimethyllysine). The interval 92–95 is G3; sequence DAPG. Residues 92–96 and 154–157 each bind GTP; these read DAPGH and NKMD. Residues 154-157 are G4; sequence NKMD. The tract at residues 193-195 is G5; that stretch reads SGF. At K317 the chain carries N6,N6-dimethyllysine; alternate. At K317 the chain carries N6-methyllysine; alternate. K391 bears the N6-methyllysine mark.

The protein belongs to the TRAFAC class translation factor GTPase superfamily. Classic translation factor GTPase family. EF-Tu/EF-1A subfamily.

Its subcellular location is the cytoplasm. This protein promotes the GTP-dependent binding of aminoacyl-tRNA to the A-site of ribosomes during protein biosynthesis. The chain is Elongation factor 1-alpha (TEF) from Pseudoechria curvicolla (Podospora curvicolla).